Here is a 100-residue protein sequence, read N- to C-terminus: Small ribosomal subunit protein uS14c (100 aa).

The span at 28–45 (KKEIKKVPSLSEKMEIHG) shows a compositional bias: basic and acidic residues. The tract at residues 28-59 (KKEIKKVPSLSEKMEIHGKLQSPPRNSAPTRL) is disordered.

Belongs to the universal ribosomal protein uS14 family. As to quaternary structure, part of the 30S ribosomal subunit.

Its subcellular location is the plastid. It is found in the chloroplast. Its function is as follows. Binds 16S rRNA, required for the assembly of 30S particles. The chain is Small ribosomal subunit protein uS14c from Nandina domestica (Heavenly bamboo).